Reading from the N-terminus, the 392-residue chain is Putative F-box protein At1g71320 (392 aa).

The F-box domain occupies 8–55 (NPKTIFIPDDIAEGIFHHLPIKSLARFKVLSKKWTSMIESTYFSHKRL).

This Arabidopsis thaliana (Mouse-ear cress) protein is Putative F-box protein At1g71320.